Reading from the N-terminus, the 307-residue chain is Porphobilinogen deaminase (307 aa).

Cys-239 is subject to S-(dipyrrolylmethanemethyl)cysteine.

This sequence belongs to the HMBS family. Monomer. Dipyrromethane is required as a cofactor.

The catalysed reaction is 4 porphobilinogen + H2O = hydroxymethylbilane + 4 NH4(+). The protein operates within porphyrin-containing compound metabolism; protoporphyrin-IX biosynthesis; coproporphyrinogen-III from 5-aminolevulinate: step 2/4. Functionally, tetrapolymerization of the monopyrrole PBG into the hydroxymethylbilane pre-uroporphyrinogen in several discrete steps. The sequence is that of Porphobilinogen deaminase (hemC) from Campylobacter jejuni subsp. jejuni serotype O:2 (strain ATCC 700819 / NCTC 11168).